An 88-amino-acid chain; its full sequence is Small ribosomal subunit protein bS20 (88 aa).

Belongs to the bacterial ribosomal protein bS20 family.

Functionally, binds directly to 16S ribosomal RNA. The polypeptide is Small ribosomal subunit protein bS20 (Renibacterium salmoninarum (strain ATCC 33209 / DSM 20767 / JCM 11484 / NBRC 15589 / NCIMB 2235)).